The following is a 486-amino-acid chain: MKEIKHFINGAFVGSASGRTFEDVNPANGQVIARVHEAGRAEVDAAVQAARAALKGPWGKMSVSERAEILHRVADGITARFDEFLEAECLDTGKPKSLASHIDIPRGAANFKVFADLLKNVATEAFEMATPDGSGAINYAVRRPKGVIGVISPWNLPLLLMTWKVGPALACGNTVVVKPSEETPLTTALLGEVMQAAGVPAGVYNVVHGFGPDSAGAFLTEHPDVNAITFTGETRTGEAIMRAAAKGVRPVSFELGGKNAGIVFADCDLDKAIEGSMRSVFANGGQVCLGTERLYVERPIFDEFVARLKAGAESLVIGTPDDPQANFGPLISLQHREKVLSYYQKAVDEGATVVTGGGVPEMPAELAGGAWVQPTIWTGLADGAAVVTEEIFGPCCHIRPFDREEEAVELANSLPYGLAATIWTENTSRAHRVAGQLEAGIVWVNSWFLRDLRTAFGGSKQSGIGREGGVHSLEFYTELKNICVKL.

Residues Glu-254 and Cys-288 contribute to the active site.

It belongs to the aldehyde dehydrogenase family.

The catalysed reaction is (2Z,4E)-2-hydroxy-6-oxohexa-2,4-dienoate + NAD(+) + H2O = (2Z,4E)-2-hydroxyhexa-2,4-dienedioate + NADH + 2 H(+). It functions in the pathway aromatic compound metabolism; benzoate degradation via hydroxylation. 2-hydroxymuconic acid semialdehyde can be converted to 2-hydroxypent-2,4-dienoate either directly by the action of 2-hydroxymuconic semialdehyde hydrolase (HMSH) or by the action of three sequential enzymes, the first of which is HMSD. The protein is 2-hydroxymuconic semialdehyde dehydrogenase (dmpC) of Pseudomonas sp. (strain CF600).